Reading from the N-terminus, the 644-residue chain is Kelch-like protein 34 (644 aa).

One can recognise a BTB domain in the interval 29 to 96 (CDVTLETEGS…IYTAWLSLSM (68 aa)). In terms of domain architecture, BACK spans 131-238 (CCFAANVAAR…PADVLRRVYS (108 aa)). The disordered stretch occupies residues 304–329 (AARGQVAAPEPEEEEEELEEEEEEEE). The span at 313-329 (EPEEEEEELEEEEEEEE) shows a compositional bias: acidic residues. Kelch repeat units follow at residues 320-366 (ELEE…TAGN), 367-425 (FLFV…AVGE), 426-473 (RLLA…VGDR), 475-526 (VVYI…VLRG), 528-571 (VFAF…VVEE), and 573-623 (ALLL…VLQL).

This is Kelch-like protein 34 (KLHL34) from Homo sapiens (Human).